A 99-amino-acid polypeptide reads, in one-letter code: Integration host factor subunit alpha (99 aa).

It belongs to the bacterial histone-like protein family. Heterodimer of an alpha and a beta chain.

Functionally, this protein is one of the two subunits of integration host factor, a specific DNA-binding protein that functions in genetic recombination as well as in transcriptional and translational control. In Psychrobacter cryohalolentis (strain ATCC BAA-1226 / DSM 17306 / VKM B-2378 / K5), this protein is Integration host factor subunit alpha.